The primary structure comprises 163 residues: Phospholipase A2 homolog 3 (163 aa).

The N-terminal stretch at 1–43 (MARGGSFSRLRLRAGVVVAAAAAALLLFAVVAPPAAALNIGLQ) is a signal peptide. Cystine bridges form between cysteine 55-cysteine 83, cysteine 59-cysteine 89, cysteine 64-cysteine 137, cysteine 76-cysteine 96, cysteine 95-cysteine 121, and cysteine 102-cysteine 114. The Ca(2+) site is built by tyrosine 75, glycine 77, and tyrosine 80. Residue histidine 99 is part of the active site. Aspartate 100 is a binding site for Ca(2+).

This sequence belongs to the phospholipase A2 family. The cofactor is Ca(2+).

The protein resides in the secreted. It carries out the reaction a 1,2-diacyl-sn-glycero-3-phosphocholine + H2O = a 1-acyl-sn-glycero-3-phosphocholine + a fatty acid + H(+). Inhibited by EGTA. In terms of biological role, PA2 catalyzes the calcium-dependent hydrolysis of the 2-acyl groups in 3-sn-phosphoglycerides. Releases lysophospholipids (LPLs) and free fatty acids (FFAs) from membrane phospholipids in response to hormones and other external stimuli. This chain is Phospholipase A2 homolog 3 (PLA2-III), found in Oryza sativa subsp. japonica (Rice).